The chain runs to 363 residues: Cytochrome c oxidase subunit 2 (363 aa).

A disordered region spans residues 1-23; the sequence is MTPRGPGRLQRLSQCRPQRGSGG. Residues 1 to 41 form the signal peptide; that stretch reads MTPRGPGRLQRLSQCRPQRGSGGPARGLRQLALAAMLGALA. The next 2 membrane-spanning stretches (helical) occupy residues 71–91 and 118–138; these read LWIG…GLIF and LVLT…TVVV. Cu cation-binding residues include H254, C295, C299, and H303.

The protein belongs to the cytochrome c oxidase subunit 2 family. Cu cation serves as cofactor. The cofactor is heme.

The protein resides in the cell membrane. The catalysed reaction is 4 Fe(II)-[cytochrome c] + O2 + 8 H(+)(in) = 4 Fe(III)-[cytochrome c] + 2 H2O + 4 H(+)(out). In terms of biological role, subunits I and II form the functional core of the enzyme complex. Electrons originating in cytochrome c are transferred via heme a and Cu(A) to the binuclear center formed by heme a3 and Cu(B). This is Cytochrome c oxidase subunit 2 (ctaC) from Mycobacterium bovis (strain ATCC BAA-935 / AF2122/97).